The chain runs to 210 residues: Outer-membrane lipoprotein LolB (210 aa).

Positions 1 to 18 are cleaved as a signal peptide; it reads MKKFTKILSLSTLLFLAG. Cys19 carries N-palmitoyl cysteine lipidation. Cys19 is lipidated: S-diacylglycerol cysteine.

Belongs to the LolB family. Monomer.

Its subcellular location is the cell outer membrane. Functionally, plays a critical role in the incorporation of lipoproteins in the outer membrane after they are released by the LolA protein. The sequence is that of Outer-membrane lipoprotein LolB from Actinobacillus pleuropneumoniae serotype 7 (strain AP76).